The chain runs to 101 residues: MKIIRKNKKDKERREQYKQAEQMKNMYKMLRRNELLDQETRNYFNMQVTSSEKNSSISRIKNRCVETGRSRGIISAYRISRLRFREYMKMGLISGVKKRSY.

This sequence belongs to the universal ribosomal protein uS14 family. In terms of assembly, component of the mitochondrial ribosome small subunit (28S) which comprises a 12S rRNA and about 30 distinct proteins. Interacts with LIAT1.

It is found in the mitochondrion. The polypeptide is Small ribosomal subunit protein uS14m (mrps14) (Dictyostelium citrinum (Slime mold)).